A 255-amino-acid polypeptide reads, in one-letter code: Uracil-DNA glycosylase (255 aa).

Asp-93 acts as the Proton acceptor in catalysis.

Belongs to the uracil-DNA glycosylase (UDG) superfamily. UNG family.

It localises to the host nucleus. The enzyme catalyses Hydrolyzes single-stranded DNA or mismatched double-stranded DNA and polynucleotides, releasing free uracil.. In terms of biological role, excises uracil residues from the DNA which can arise as a result of misincorporation of dUMP residues by DNA polymerase or deamination of cytosines. Therefore may reduce deleterious uracil incorporation into the viral genome, particularly in terminally differentiated cells which lack DNA repair enzymes. This is Uracil-DNA glycosylase (U81) from Human herpesvirus 6A (strain Uganda-1102) (HHV-6 variant A).